The sequence spans 71 residues: Small ribosomal subunit protein bS21 (71 aa).

Belongs to the bacterial ribosomal protein bS21 family.

This is Small ribosomal subunit protein bS21 from Blochmanniella pennsylvanica (strain BPEN).